A 151-amino-acid polypeptide reads, in one-letter code: uncharacterized protein (151 aa).

It to equivalent protein in phage 82.

This is an uncharacterized protein from Escherichia coli (strain K12).